The following is a 580-amino-acid chain: Acyl-coenzyme A synthetase ACSM3, mitochondrial (580 aa).

The N-terminal 21 residues, 1–21 (MVMLLRARCFQRLAIPDPMRV), are a transit peptide targeting the mitochondrion. N6-succinyllysine occurs at positions 67 and 100. Residue lysine 151 is modified to N6-acetyllysine. ATP-binding positions include 229–237 (TSGTTGPPK), 368–373 (EGYGQT), aspartate 455, arginine 470, and lysine 566.

It belongs to the ATP-dependent AMP-binding enzyme family. The cofactor is Mg(2+). Mn(2+) serves as cofactor. As to expression, detected in kidney (at protein level). Detected in kidney proximal tubules and in liver. Detected at low levels in testis, stomach, heart and lung.

The protein resides in the mitochondrion. The protein localises to the mitochondrion matrix. It carries out the reaction a medium-chain fatty acid + ATP + CoA = a medium-chain fatty acyl-CoA + AMP + diphosphate. The catalysed reaction is propanoate + ATP + CoA = propanoyl-CoA + AMP + diphosphate. The enzyme catalyses butanoate + ATP + CoA = butanoyl-CoA + AMP + diphosphate. It catalyses the reaction 2-methylpropanoate + ATP + CoA = 2-methylpropanoyl-CoA + AMP + diphosphate. It carries out the reaction 2-methylbutanoate + ATP + CoA = 2-methylbutanoyl-CoA + AMP + diphosphate. The catalysed reaction is octanoate + ATP + CoA = octanoyl-CoA + AMP + diphosphate. In terms of biological role, catalyzes the activation of fatty acids by CoA to produce an acyl-CoA, the first step in fatty acid metabolism. Capable of activating medium-chain fatty acids with a preference for isobutyrate among fatty acids with 2-6 carbon atoms. This is Acyl-coenzyme A synthetase ACSM3, mitochondrial (Acsm3) from Mus musculus (Mouse).